The following is a 144-amino-acid chain: Putative pre-16S rRNA nuclease (144 aa).

This sequence belongs to the YqgF nuclease family.

It is found in the cytoplasm. In terms of biological role, could be a nuclease involved in processing of the 5'-end of pre-16S rRNA. This is Putative pre-16S rRNA nuclease from Chlorobium phaeobacteroides (strain BS1).